Here is a 186-residue protein sequence, read N- to C-terminus: NADH-dependent FMN reductase SfnE (186 aa).

Belongs to the SsuE family.

It catalyses the reaction FMNH2 + NAD(+) = FMN + NADH + 2 H(+). Involved in the dimethyl sulfide degradation pathway. Catalyzes the NADH-dependent reduction of FMN. The sequence is that of NADH-dependent FMN reductase SfnE from Pseudomonas putida (Arthrobacter siderocapsulatus).